A 146-amino-acid polypeptide reads, in one-letter code: UPF0742 protein PB2B2.17c (146 aa).

Residues 38 to 60 (LTVKYCLAVKLLIYLLYCWYIYS) traverse the membrane as a helical segment.

Belongs to the UPF0742 family.

Its subcellular location is the cytoplasm. The protein localises to the nucleus membrane. The protein is UPF0742 protein PB2B2.17c of Schizosaccharomyces pombe (strain 972 / ATCC 24843) (Fission yeast).